The primary structure comprises 345 residues: NADPH dehydrogenase (345 aa).

23–26 (SPMC) is a binding site for FMN. Tyr28 serves as a coordination point for substrate. Residues Ala60 and Gln102 each contribute to the FMN site. Residue 164-167 (HGAH) participates in substrate binding. Residues Arg215 and 307-308 (GR) each bind FMN.

This sequence belongs to the NADH:flavin oxidoreductase/NADH oxidase family. NamA subfamily. As to quaternary structure, homotetramer. It depends on FMN as a cofactor.

It catalyses the reaction A + NADPH + H(+) = AH2 + NADP(+). Catalyzes the reduction of the double bond of an array of alpha,beta-unsaturated aldehydes and ketones. It also reduces the nitro group of nitroester and nitroaromatic compounds. It could have a role in detoxification processes. The polypeptide is NADPH dehydrogenase (Bacillus anthracis (strain CDC 684 / NRRL 3495)).